The following is a 372-amino-acid chain: Glutamate 5-kinase (372 aa).

Lys14 provides a ligand contact to ATP. Residues Ser54, Asp141, and Asn153 each coordinate substrate. 173-174 (TD) contacts ATP. Residues 280–358 (RGTLVLDDGA…EAIVRELGYM (79 aa)) enclose the PUA domain.

Belongs to the glutamate 5-kinase family.

Its subcellular location is the cytoplasm. It catalyses the reaction L-glutamate + ATP = L-glutamyl 5-phosphate + ADP. It participates in amino-acid biosynthesis; L-proline biosynthesis; L-glutamate 5-semialdehyde from L-glutamate: step 1/2. Its function is as follows. Catalyzes the transfer of a phosphate group to glutamate to form L-glutamate 5-phosphate. The polypeptide is Glutamate 5-kinase (Pseudomonas syringae pv. tomato (strain ATCC BAA-871 / DC3000)).